A 621-amino-acid chain; its full sequence is Glucose 1,6-bisphosphate synthase (621 aa).

Residues R73 and S175 each contribute to the alpha-D-glucose 1,6-bisphosphate site. S175 (phosphoserine intermediate) is an active-site residue. Mg(2+)-binding residues include S175, D332, D334, and D336. S175 is subject to Phosphoserine. Residues D336, R337, E433, S435, and K447 each coordinate alpha-D-glucose 1,6-bisphosphate.

The protein belongs to the phosphohexose mutase family. In terms of tissue distribution, expressed at highest levels in the brain and testis, at intermediate levels in thymus, spleen, lung and skeletal muscle, and at lowest levels in kidney, liver and heart.

It is found in the cytoplasm. The protein localises to the cytosol. The enzyme catalyses (2R)-3-phospho-glyceroyl phosphate + alpha-D-glucose 1-phosphate = alpha-D-glucose 1,6-bisphosphate + (2R)-3-phosphoglycerate + H(+). The catalysed reaction is alpha-D-glucose 6-phosphate + (2R)-3-phospho-glyceroyl phosphate = alpha-D-glucose 1,6-bisphosphate + (2R)-3-phosphoglycerate + H(+). It carries out the reaction (2R)-3-phospho-glyceroyl phosphate + alpha-D-ribose 1-phosphate = alpha-D-ribose 1,5-bisphosphate + (2R)-3-phosphoglycerate + H(+). It catalyses the reaction 2-deoxy-alpha-D-ribose 1-phosphate + (2R)-3-phospho-glyceroyl phosphate = 2-deoxy-alpha-D-ribose 1,5-bisphosphate + (2R)-3-phosphoglycerate + H(+). The enzyme catalyses (2R)-3-phospho-glyceroyl phosphate + alpha-D-mannose 1-phosphate = alpha-D-mannose 1,6-bisphosphate + (2R)-3-phosphoglycerate + H(+). In terms of biological role, glucose 1,6-bisphosphate synthase using 1,3-bisphosphoglycerate as a phosphate donor and a series of 1-phosphate sugars, including glucose 1-phosphate, mannose 1-phosphate, ribose 1-phosphate and deoxyribose 1-phosphate, as acceptors. In vitro, also exhibits very low phosphopentomutase and phosphoglucomutase activity which are most probably not physiologically relevant. This is Glucose 1,6-bisphosphate synthase from Mus musculus (Mouse).